We begin with the raw amino-acid sequence, 2110 residues long: Protein Ycf2 (2110 aa).

1336 to 1343 is an ATP binding site; the sequence is GSIGTGRS. Residues 1852–1876 are disordered; sequence EEEAELQDEEAELQDEGAGRKDEEA. Positions 1854 to 1866 are enriched in acidic residues; the sequence is EAELQDEEAELQD.

The protein belongs to the Ycf2 family.

It localises to the plastid. It is found in the chloroplast stroma. Probable ATPase of unknown function. Its presence in a non-photosynthetic plant (Epifagus virginiana) and experiments in tobacco indicate that it has an essential function which is probably not related to photosynthesis. This Pelargonium hortorum (Common geranium) protein is Protein Ycf2 (ycf2-A).